A 148-amino-acid polypeptide reads, in one-letter code: Large ribosomal subunit protein bL9 (148 aa).

It belongs to the bacterial ribosomal protein bL9 family.

In terms of biological role, binds to the 23S rRNA. In Solibacter usitatus (strain Ellin6076), this protein is Large ribosomal subunit protein bL9.